The chain runs to 642 residues: DNA primase (642 aa).

Residues 41–65 (CPFHNEKSPSFHVRPNHGHFHCFGC) form a CHC2-type zinc finger. Positions 262 to 348 (HQAVVVEGYT…AGKSFVAVAA (87 aa)) constitute a Toprim domain. Residues Glu268, Asp319, and Asp321 each contribute to the Mg(2+) site. Residues 445 to 480 (NRRSVPERTRRRSVSVEQSPFMQPPGAPADQLAARP) are disordered.

This sequence belongs to the DnaG primase family. Monomer. Interacts with DnaB. The cofactor is Zn(2+). Requires Mg(2+) as cofactor.

The catalysed reaction is ssDNA + n NTP = ssDNA/pppN(pN)n-1 hybrid + (n-1) diphosphate.. In terms of biological role, RNA polymerase that catalyzes the synthesis of short RNA molecules used as primers for DNA polymerase during DNA replication. This Mycobacterium leprae (strain TN) protein is DNA primase.